A 1154-amino-acid chain; its full sequence is Chromosome partition protein Smc (1154 aa).

ATP is bound at residue 32-39 (PNGCGKSN). Coiled coils occupy residues 170–215 (VAGL…ARQA), 282–505 (LREA…LNGE), and 627–993 (AARR…EARE).

It belongs to the SMC family. In terms of assembly, homodimer.

It localises to the cytoplasm. In terms of biological role, required for chromosome condensation and partitioning. The chain is Chromosome partition protein Smc from Rhodopseudomonas palustris (strain ATCC BAA-98 / CGA009).